We begin with the raw amino-acid sequence, 122 residues long: MPLKIRLSRGGAKKRPFYRVVVADSRMPRDGRFIERLGVFDPLKAKDSAERVVLDAEKAKEWIAKGAQPTDRVARLLDGLGVLTREAQSNPKKALPKKKAQERAAASAAAAEKAAAAAAPEA.

The tract at residues 87-122 (AQSNPKKALPKKKAQERAAASAAAAEKAAAAAAPEA) is disordered. Residues 103-122 (RAAASAAAAEKAAAAAAPEA) are compositionally biased toward low complexity.

It belongs to the bacterial ribosomal protein bS16 family.

This is Small ribosomal subunit protein bS16 from Methylocella silvestris (strain DSM 15510 / CIP 108128 / LMG 27833 / NCIMB 13906 / BL2).